We begin with the raw amino-acid sequence, 288 residues long: 33 kDa chaperonin (288 aa).

2 cysteine pairs are disulfide-bonded: Cys-225/Cys-227 and Cys-258/Cys-261.

The protein belongs to the HSP33 family. In terms of processing, under oxidizing conditions two disulfide bonds are formed involving the reactive cysteines. Under reducing conditions zinc is bound to the reactive cysteines and the protein is inactive.

The protein localises to the cytoplasm. In terms of biological role, redox regulated molecular chaperone. Protects both thermally unfolding and oxidatively damaged proteins from irreversible aggregation. Plays an important role in the bacterial defense system toward oxidative stress. The sequence is that of 33 kDa chaperonin from Shewanella denitrificans (strain OS217 / ATCC BAA-1090 / DSM 15013).